The sequence spans 242 residues: DNA repair protein RecO (242 aa).

It belongs to the RecO family. As to quaternary structure, monomer.

Its function is as follows. Involved in DNA repair and RecF pathway recombination. The sequence is that of DNA repair protein RecO from Shigella flexneri serotype 5b (strain 8401).